Reading from the N-terminus, the 299-residue chain is MEPPIPQSVPLTPSSVMVQPLLDSRTAHSRLQHPLTILPIDQMKTSHVENDYIDNPGLAPPSGPKRTRGGAPELAPTPARCDQDVTHHWISFSGRPSSVSSSSSTSSDQRLLDHMAPPPVADQASPRAVRIQPKAIHCKPLDLKGPAGPPELDKHFLLCEACGKCKCKECASPRTLPSCWVCNQECLCSAQTLVNYGTCMCLVQGIFYHCTNEDDEGSCADHPCSCSRSNCCARWSFMGALSLVLPCLLCYLPATGCVKLAQRGYDRLRRPGCRCKHTNSVICKAAAGDAKASRPDKPF.

Position 1 is an N-acetylmethionine (Met1). Disordered stretches follow at residues 50–79 (NDYIDNPGLAPPSGPKRTRGGAPELAPTPA) and 92–127 (FSGRPSSVSSSSSTSSDQRLLDHMAPPPVADQASPR). A compositionally biased stretch (low complexity) spans 92–107 (FSGRPSSVSSSSSTSS). Ser125 carries the phosphoserine modification. Positions 166–273 (KCKECASPRT…GYDRLRRPGC (108 aa)) constitute an SPR domain.

Belongs to the sprouty family. In terms of assembly, interacts (via C-terminus) with TESK1 (via both C- and N-termini); the interaction inhibits TESK1 kinase activity. Interacts with RAF1. Interacts with CAV1 (via C-terminus).

The protein localises to the cytoplasm. Its subcellular location is the cell projection. The protein resides in the ruffle membrane. Functionally, suppresses the insulin receptor and EGFR-transduced MAPK signaling pathway, but does not inhibit MAPK activation by a constitutively active mutant Ras. Probably impairs the formation of GTP-Ras. Inhibits Ras-independent, but not Ras-dependent, activation of RAF1. Represses integrin-mediated cell spreading via inhibition of TESK1-mediated phosphorylation of cofilin. The chain is Protein sprouty homolog 4 (SPRY4) from Bos taurus (Bovine).